The chain runs to 368 residues: MKNKYYPLRSSMDELSAKNDNEIDLEKGPLPEYNSEDGSTLPPYSENINLKDPKQMGANNPNLFNTDESTTPPDYGEDSLSITHRENHSSGTADNSSTSPLKKAFLSFISIFVLNVPAVCYLTYKDALFKDYGKDEWVYFGVWCAICLMIFISLWYFYETWIKAVKVTVIFLAQCIKVTVVFLAQCVKVISIGLFNIRREMMIIIWLLWLIICCILFGCVKSGDLNLNKALIYSTCTISAVLLLIVSSVCIPFWTFERTLAKLAKVFLLQSGIVLVLNGTMFLRGKHFEWTGCEIEASVLFIMGNVLFLCEMECPGALIRTRNSIRNGIAFILGGIGNAMMGLANAFRGGNDNNNNIPLGEMDVEGEV.

The segment at Met1–Thr98 is disordered. Residues Ser11–Pro29 show a composition bias toward basic and acidic residues. Composition is skewed to polar residues over residues Gly57–Pro72 and Ser89–Thr98. The next 7 helical transmembrane spans lie at Phe105–Tyr124, Tyr139–Tyr158, Ile170–Ile192, Met202–Lys221, Ser234–Phe256, Val266–Leu283, and Gly328–Gly350.

Belongs to the WTF family. Homomer. Forms protein aggregates. The two isoforms can interact with each other and with themselves. High sequence similarity is required for their interaction.

The protein localises to the spore membrane. It is found in the vacuole membrane. The protein resides in the ascus epiplasm. It localises to the cytoplasm. Its subcellular location is the endoplasmic reticulum membrane. Functionally, promotes unequal transmission of alleles from the parental zygote to progeny spores by acting as poison/antidote system where the poison and antidote proteins are produced from the same locus; the poison component is trans-acting and targets all spores within an ascus whereas the antidote component is spore-specific, leading to poisoning of all progeny that do not inherit the allele. Localizes isoform 2 to the vacuole thereby facilitating its degradation. In terms of biological role, forms toxic aggregates that disrupt spore maturation. The protein is Meiotic driver wtf23 of Schizosaccharomyces pombe (strain 972 / ATCC 24843) (Fission yeast).